A 221-amino-acid chain; its full sequence is Thyrotroph embryonic factor (221 aa).

The tract at residues 72–116 is disordered; that stretch reads ESASSSTASPPSSSTAVFQPSETVSSTESSLEKERETPSPIDPNC. Over residues 73–100 the composition is skewed to low complexity; that stretch reads SASSSTASPPSSSTAVFQPSETVSSTES. The region spanning 173-221 is the bZIP domain; sequence DEKYWTRRKKNNVAAKRSRDARRLKENQITIRAAFLEKENTALRTEVAD. The segment at 175–195 is basic motif; it reads KYWTRRKKNNVAAKRSRDARR. The tract at residues 196–203 is leucine-zipper; it reads LKENQITI.

It belongs to the bZIP family. PAR subfamily. As to quaternary structure, binds DNA as a homodimer or a heterodimer. Can form a heterodimer with DBP.

It localises to the nucleus. Functionally, transcription factor that binds to and transactivates the TSHB promoter. Binds to a minimal DNA-binding sequence 5'-[TC][AG][AG]TTA[TC][AG]-3'. The chain is Thyrotroph embryonic factor (TEF) from Phodopus sungorus (Striped hairy-footed hamster).